We begin with the raw amino-acid sequence, 359 residues long: MASLRSVLKSQSLRHTVRSYSSQTMPPASPFAPRHFLSIADLSPSEFATLVRNASSHKRAIKSGSMPQNLQGSLLGKTVAMIFSKRSTRTRVSTEGAVVQMGGHPMFLGKDDIQLGVNESLYDTSVVISSMVSCIVARVGKHAEVADLAKHSSVPVINALCDSFHPLQAVADFQTIYEAFTPKAHHLSSLGLEGLKIAWVGDANNVLFDMAIAATKMGVDIAVATPKGYEIPPHMLELIKSAGEGVSKPGKLLQTNIPEEAVKDADILVTDTWVSMGQEEEKAQRLKEFDGFQITAELAKRGGAKEGWKFMHCLPRHPEEVSDEVFYSNRSLVFPEAENRLWAAISALEGFVVNKGKIE.

A mitochondrion-targeting transit peptide spans 1–24 (MASLRSVLKSQSLRHTVRSYSSQT). Residues 87–90 (STRT), R138, H165, and Q168 contribute to the carbamoyl phosphate site. L-ornithine contacts are provided by N205, D271, S275, and M276. The active-site Proton acceptor is C313. Carbamoyl phosphate-binding positions include 313-314 (CL) and R340.

This sequence belongs to the aspartate/ornithine carbamoyltransferase superfamily. OTCase family. As to quaternary structure, homotrimer.

It is found in the mitochondrion matrix. It catalyses the reaction carbamoyl phosphate + L-ornithine = L-citrulline + phosphate + H(+). Its pathway is amino-acid biosynthesis; L-arginine biosynthesis; L-arginine from L-ornithine and carbamoyl phosphate: step 1/3. The polypeptide is Ornithine carbamoyltransferase, mitochondrial (argB) (Emericella nidulans (strain FGSC A4 / ATCC 38163 / CBS 112.46 / NRRL 194 / M139) (Aspergillus nidulans)).